We begin with the raw amino-acid sequence, 538 residues long: Cytochrome c-552 (538 aa).

Residues 1–55 (MKIYLRFVWILIIILNFLLNLFITTNGVIIVNAFKKSLIVAASFASLSLFNSATA) form the signal peptide. Residue His-133 participates in heme c binding. Cys-161, Cys-164, and Lys-165 together coordinate heme. Residues Cys-199, Cys-202, His-203, Cys-264, Cys-267, and His-268 each contribute to the heme c site. Ca(2+) is bound by residues Glu-270, Tyr-271, Lys-316, and Gln-318. Tyr-271 contacts substrate. His-319 is a substrate binding site. Heme c is bound by residues His-330, Cys-337, Cys-340, His-341, His-356, Cys-369, Cys-372, His-373, and His-448.

The protein belongs to the cytochrome c-552 family. The cofactor is Ca(2+). Requires heme c as cofactor.

The protein resides in the periplasm. The enzyme catalyses 6 Fe(III)-[cytochrome c] + NH4(+) + 2 H2O = 6 Fe(II)-[cytochrome c] + nitrite + 8 H(+). It participates in nitrogen metabolism; nitrate reduction (assimilation). Functionally, catalyzes the reduction of nitrite to ammonia, consuming six electrons in the process. The sequence is that of Cytochrome c-552 from Haemophilus influenzae (strain 86-028NP).